Reading from the N-terminus, the 278-residue chain is Protein mtd-1 (278 aa).

An N-terminal signal peptide occupies residues 1–17; that stretch reads MRSSLLLLVFFLSIGWA. Residues 18 to 254 are Extracellular-facing; that stretch reads RYCVHNEKSW…EMLEEIEARK (237 aa). N-linked (GlcNAc...) asparagine glycans are attached at residues Asn-40, Asn-73, Asn-163, and Asn-190. A helical membrane pass occupies residues 255–271; sequence VPVDSSAPVNIILSIAF. The Cytoplasmic portion of the chain corresponds to 272 to 278; it reads SIFLIHF.

The protein localises to the cell membrane. In terms of biological role, plays a role in mechanosensory transduction (touch sensitivity). This Caenorhabditis elegans protein is Protein mtd-1.